The chain runs to 398 residues: Histidinol-phosphate aminotransferase (398 aa).

Polar residues predominate over residues 1–10 (MTGQRATPQP). The segment at 1–30 (MTGQRATPQPTLDDLPLRDDLRGKSPYGAP) is disordered. Lys-234 carries the N6-(pyridoxal phosphate)lysine modification.

The protein belongs to the class-II pyridoxal-phosphate-dependent aminotransferase family. Histidinol-phosphate aminotransferase subfamily. As to quaternary structure, homodimer. It depends on pyridoxal 5'-phosphate as a cofactor.

The enzyme catalyses L-histidinol phosphate + 2-oxoglutarate = 3-(imidazol-4-yl)-2-oxopropyl phosphate + L-glutamate. The protein operates within amino-acid biosynthesis; L-histidine biosynthesis; L-histidine from 5-phospho-alpha-D-ribose 1-diphosphate: step 7/9. The protein is Histidinol-phosphate aminotransferase of Mycolicibacterium paratuberculosis (strain ATCC BAA-968 / K-10) (Mycobacterium paratuberculosis).